The sequence spans 474 residues: ABHD16B (474 aa).

In terms of domain architecture, AB hydrolase-1 spans 175–293 (VICCEGNAGF…MPQSWKGLVV (119 aa)). Catalysis depends on charge relay system residues S248, D323, and H423.

This sequence belongs to the AB hydrolase superfamily. ABHD16 family.

The catalysed reaction is a 1,2-diacyl-sn-glycero-3-phospho-L-serine + H2O = a 2-acyl-sn-glycero-3-phospho-L-serine + a fatty acid + H(+). It catalyses the reaction a 1-acylglycerol + H2O = glycerol + a fatty acid + H(+). The enzyme catalyses 1-(9Z-octadecenoyl)-glycerol + H2O = glycerol + (9Z)-octadecenoate + H(+). Functionally, hydrolyzes the sn-1 position of glycerophospholipids with high specificity towards phosphatidylserine (PS), PS-PLA1 enzyme. Also hydrolyzes the acyl chain of glycerolipids with a preference for the monoacylglycerol (MAG) 1-acylglycerol, MAG lipase. Plays a regulatory role in cellular lipid homeostasis by modulating genes involved in neutral lipid degradation and in phospholipid synthesis and composition. The chain is ABHD16B from Rattus norvegicus (Rat).